The following is a 425-amino-acid chain: UDP-sugar transporter protein SLC35A5 (425 aa).

Topologically, residues 1 to 7 (MESNCGH) are cytoplasmic. A helical membrane pass occupies residues 8–28 (PMLSVSSAMYTFLLGAIFITL). Topologically, residues 29–52 (SSSRILLVKYSANEENKYDYLPTT) are lumenal. The helical transmembrane segment at 53–73 (VNVCSELVKLVFCALVSFWVL) threads the bilayer. The Cytoplasmic segment spans residues 74–92 (KKEDHQNRKLRCGSWKEFF). Residues 93-115 (NFMKWSIPAFLYFLDNLIVFYVL) traverse the membrane as a helical segment. Over 116-119 (SYLQ) the chain is Lumenal. A helical membrane pass occupies residues 120–142 (PAMAVIFSNFSIITTALLFRIVL). At 143 to 147 (KRHLN) the chain is on the cytoplasmic side. Residues 148–168 (GIQWASLLILFLSIVALTSGT) traverse the membrane as a helical segment. The Lumenal portion of the chain corresponds to 169–228 (ETSQHSLAGHGFHHDALFSPSNSCLLFRSECPRKDNCTAKEWTFSEAQWNTTARVFSHIR). N-linked (GlcNAc...) asparagine glycosylation is found at Asn204 and Asn218. A helical membrane pass occupies residues 229-249 (LGLGHVLIIVQCFISSMANIY). The Cytoplasmic portion of the chain corresponds to 250–263 (NEKILKEGNQLTES). The helical transmembrane segment at 264–284 (IFVQNSKLYFFGVLFNGLTLG) threads the bilayer. At 285-303 (LQSGNRDQIKNCGIFYGHN) the chain is on the lumenal side. A helical transmembrane segment spans residues 304–324 (AFSVALIFVTAFQGLSVAFIL). The Cytoplasmic segment spans residues 325–330 (KFLDNM). A helical membrane pass occupies residues 331–351 (FHVLMAQVTTVVITTVSVLVF). Topologically, residues 352-354 (DFR) are lumenal. The helical transmembrane segment at 355–375 (PSLEFFLEAPSVLLSILIYNA) threads the bilayer. Over 376-425 (SNPQGVENVPRKERIRDLSGTLWERSSGDGEELERLTKPKSDIESDEDTF) the chain is Cytoplasmic. Phosphoserine is present on residues Ser394, Ser416, and Ser420. Positions 398–425 (WERSSGDGEELERLTKPKSDIESDEDTF) are disordered. Residues 408–418 (LERLTKPKSDI) are compositionally biased toward basic and acidic residues.

The protein belongs to the nucleotide-sugar transporter family. SLC35A subfamily. Probably forms homooligomers and heterooligomers with SLC35A1, SLC35A2, SLC35A3 and SLC35A4.

It is found in the golgi apparatus membrane. It catalyses the reaction UMP(out) + UDP-alpha-D-glucuronate(in) = UMP(in) + UDP-alpha-D-glucuronate(out). The catalysed reaction is UMP(out) + UDP-N-acetyl-alpha-D-glucosamine(in) = UMP(in) + UDP-N-acetyl-alpha-D-glucosamine(out). It carries out the reaction UDP-N-acetyl-alpha-D-galactosamine(in) + UMP(out) = UDP-N-acetyl-alpha-D-galactosamine(out) + UMP(in). Probable UDP-sugar:UMP transmembrane antiporter involved in UDP-alpha-D-glucuronate/UDP-GlcA, UDP-GlcNAc/UDP-N-acetyl-alpha-D-glucosamine and UDP-N-acetyl-alpha-D-galactosamine/UDP-GalNAc transport from the cytosol to the lumen of the Golgi. This chain is UDP-sugar transporter protein SLC35A5, found in Bos taurus (Bovine).